Consider the following 363-residue polypeptide: UDP-3-O-acylglucosamine N-acyltransferase (363 aa).

The active-site Proton acceptor is the H266.

This sequence belongs to the transferase hexapeptide repeat family. LpxD subfamily. As to quaternary structure, homotrimer.

The catalysed reaction is a UDP-3-O-[(3R)-3-hydroxyacyl]-alpha-D-glucosamine + a (3R)-hydroxyacyl-[ACP] = a UDP-2-N,3-O-bis[(3R)-3-hydroxyacyl]-alpha-D-glucosamine + holo-[ACP] + H(+). It functions in the pathway bacterial outer membrane biogenesis; LPS lipid A biosynthesis. Its function is as follows. Catalyzes the N-acylation of UDP-3-O-acylglucosamine using 3-hydroxyacyl-ACP as the acyl donor. Is involved in the biosynthesis of lipid A, a phosphorylated glycolipid that anchors the lipopolysaccharide to the outer membrane of the cell. This Bordetella parapertussis (strain 12822 / ATCC BAA-587 / NCTC 13253) protein is UDP-3-O-acylglucosamine N-acyltransferase.